Here is a 577-residue protein sequence, read N- to C-terminus: Arginine--tRNA ligase (577 aa).

A 'HIGH' region motif is present at residues Pro122–His132.

It belongs to the class-I aminoacyl-tRNA synthetase family. As to quaternary structure, monomer.

Its subcellular location is the cytoplasm. The catalysed reaction is tRNA(Arg) + L-arginine + ATP = L-arginyl-tRNA(Arg) + AMP + diphosphate. The protein is Arginine--tRNA ligase of Haemophilus influenzae (strain PittEE).